The following is an 89-amino-acid chain: HssA/B-like protein 16 (89 aa).

The protein belongs to the hssA/B family.

This chain is HssA/B-like protein 16 (hssl16), found in Dictyostelium discoideum (Social amoeba).